The chain runs to 613 residues: Laccase 1 (613 aa).

Residues 1–20 (MSRFARLLLIVALFFTGAWA) form the signal peptide. Plastocyanin-like domains follow at residues 29 to 142 (ITWK…IRPK) and 171 to 359 (YLVV…MRIP). The N-linked (GlcNAc...) asparagine glycan is linked to N74. Cu cation is bound by residues H78, H80, H122, and H124. N256, N279, N444, N468, and N484 each carry an N-linked (GlcNAc...) asparagine glycan. One can recognise a Plastocyanin-like 3 domain in the interval 468–598 (NATRDTENDG…GGMGIAILDG (131 aa)). Cu cation-binding residues include H506, H509, and H511. A glycan (N-linked (GlcNAc...) asparagine) is linked at N526. The Cu cation site is built by H580, C581, H582, and H586.

The protein belongs to the multicopper oxidase family. Cu cation is required as a cofactor.

Its subcellular location is the cell surface. It participates in pigment biosynthesis. In terms of biological role, laccase; part of the Pks1 gene cluster that mediates the biosynthesis of an anthraquinone derivative pigment that contributes to conidial pigmentation that provides protection from UV radiation, heat and cold stress. The polyketide synthase Pks1 produces 1-acetyl-2,4,6,8-tetrahydroxy-9,10-anthraquinone though condensation of acetyl-CoA with malonyl-CoA. The dehydratase EthD and the laccase Mlac1 further convert the anthraquinone derivative into the final conidial pigment. In Metarhizium guizhouense (strain ARSEF 977), this protein is Laccase 1.